The sequence spans 174 residues: Small ribosomal subunit protein uS5 (174 aa).

The region spanning 17–80 (WQERVVQIRR…ADGKKHLIDV (64 aa)) is the S5 DRBM domain.

The protein belongs to the universal ribosomal protein uS5 family. As to quaternary structure, part of the 30S ribosomal subunit. Contacts proteins S4 and S8.

Its function is as follows. With S4 and S12 plays an important role in translational accuracy. Located at the back of the 30S subunit body where it stabilizes the conformation of the head with respect to the body. This is Small ribosomal subunit protein uS5 from Thermosynechococcus vestitus (strain NIES-2133 / IAM M-273 / BP-1).